The primary structure comprises 142 residues: MARYMLLLLLAVWVLTGELWPGAEARAAPYGVRLCGREFIRAVIFTCGGSRWRRSDILAHEAMGDTFPDADADEDSLAGELDEAMGSSEWLALTKSPQAFYRGRPSWQGTPGVLRGSRDVLAGLSSSCCKWGCSKSEISSLC.

The first 25 residues, 1 to 25 (MARYMLLLLLAVWVLTGELWPGAEA), serve as a signal peptide directing secretion. Cystine bridges form between C35-C129, C47-C142, and C128-C133. Residues 55 to 118 (SDILAHEAMG…GTPGVLRGSR (64 aa)) constitute a propeptide, connecting peptide.

The protein belongs to the insulin family. As to quaternary structure, heterodimer of a B chain and an A chain linked by two disulfide bonds.

Its subcellular location is the secreted. In terms of biological role, may play a role in neuropeptide signaling processes. Ligand for LGR7, RXFP3 and RXFP4. The polypeptide is Relaxin-3 (RLN3) (Homo sapiens (Human)).